The sequence spans 612 residues: MPDYRSKTSTHGRNMAGARALWRATGMKDEDFKKPIIAIANSFTQFVPGHVHLKDLGQLVAREIEKAGGVAKEFNTIAVDDGIAMGHDGMLYSLPSREIIADSVEYMVNAHCADAIVCISNCDKITPGMLMAALRLNIPVVFVSGGPMEAGKTKLASHGLDLVDAMVVAADDSCSDEKVAEYERSACPTCGSCSGMFTANSMNCLTEALGLSLPGNGSTLATHADREQLFLRAGRLAVELCQRYYGEGDDSVLPRNIANFKAFENAMTLDIAMGGSTNTILHLLAAAQEAEVPFDLRDIDRLSRKVPQLCKVAPNIQKYHMEDVHRAGGIFSILGELARGGLLHTDVPTVHSPSMADAIAQWDITQTRDEAVHTFFKAGPAGIPTQTAFSQNTRWPSLDDDRAEGCIRSVEHAYSKEGGLAVLYGNIALDGCVVKTAGVDESIHVFEGSAKIFESQDAAVKGILGDEVKAGDIVIIRYEGPKGGPGMQEMLYPTSYLKSKGLGKQCALLTDGRFSGGTSGLSIGHASPEAAAGGAIGLVQDGDKVLIDIPNRSINLLVSDEELAARRAEQDKKGWKPAAPRARRVSTALKAYALLATSADKGAVRNKALLDG.

Asp81 is a binding site for Mg(2+). Position 122 (Cys122) interacts with [2Fe-2S] cluster. Mg(2+)-binding residues include Asp123 and Lys124. Position 124 is an N6-carboxylysine (Lys124). Residue Cys193 participates in [2Fe-2S] cluster binding. Glu489 provides a ligand contact to Mg(2+). The Proton acceptor role is filled by Ser515.

It belongs to the IlvD/Edd family. In terms of assembly, homodimer. [2Fe-2S] cluster serves as cofactor. Requires Mg(2+) as cofactor.

The catalysed reaction is (2R)-2,3-dihydroxy-3-methylbutanoate = 3-methyl-2-oxobutanoate + H2O. It carries out the reaction (2R,3R)-2,3-dihydroxy-3-methylpentanoate = (S)-3-methyl-2-oxopentanoate + H2O. It functions in the pathway amino-acid biosynthesis; L-isoleucine biosynthesis; L-isoleucine from 2-oxobutanoate: step 3/4. Its pathway is amino-acid biosynthesis; L-valine biosynthesis; L-valine from pyruvate: step 3/4. Functions in the biosynthesis of branched-chain amino acids. Catalyzes the dehydration of (2R,3R)-2,3-dihydroxy-3-methylpentanoate (2,3-dihydroxy-3-methylvalerate) into 2-oxo-3-methylpentanoate (2-oxo-3-methylvalerate) and of (2R)-2,3-dihydroxy-3-methylbutanoate (2,3-dihydroxyisovalerate) into 2-oxo-3-methylbutanoate (2-oxoisovalerate), the penultimate precursor to L-isoleucine and L-valine, respectively. This chain is Dihydroxy-acid dehydratase, found in Pseudomonas aeruginosa (strain LESB58).